A 204-amino-acid chain; its full sequence is MEKSPRYRDKAKNLLPSPSSCTTTPTRYVKDDMYETTFIRTDPSSFKQVVQLLTGIPKNPTHQPDPRFPPFHSIPPIKAVTNKKQSSSFRLSERRNSMKHYLNINPTHSGPPEILTPTILNFPALDLSPDTPLMSDPFYRPGSFSQSPSDSKPSFDDDQERSIKEKGFYLRPSPSTTPRDTEPRLLSLFPMTPIHSPAPSPHDH.

Positions 1 to 12 (MEKSPRYRDKAK) are enriched in basic and acidic residues. The segment at 1 to 26 (MEKSPRYRDKAKNLLPSPSSCTTTPT) is disordered. Residues 16 to 26 (PSPSSCTTTPT) are compositionally biased toward low complexity. Position 17 is a phosphoserine (Ser17). Positions 46–55 (FKQVVQLLTG) match the VQ motif. The interval 56-90 (IPKNPTHQPDPRFPPFHSIPPIKAVTNKKQSSSFR) is disordered. Residues Ser73 and Ser128 each carry the phosphoserine modification. Thr131 carries the phosphothreonine modification. The interval 133-204 (LMSDPFYRPG…HSPAPSPHDH (72 aa)) is disordered. A compositionally biased stretch (low complexity) spans 143-152 (SFSQSPSDSK). Ser147 and Ser173 each carry phosphoserine. Phosphothreonine occurs at positions 177 and 192. Ser196 and Ser200 each carry phosphoserine.

In terms of processing, phosphorylated on serine and threonine residues by MPK6.

The protein resides in the nucleus. May modulate WRKY transcription factor activities. The protein is VQ motif-containing protein 13 of Arabidopsis thaliana (Mouse-ear cress).